Here is a 196-residue protein sequence, read N- to C-terminus: Pyridoxal 5'-phosphate synthase subunit PdxT (196 aa).

56–58 contributes to the L-glutamine binding site; sequence GES. The Nucleophile role is filled by cysteine 85. Residues arginine 113 and 141-142 each bind L-glutamine; that span reads IR. Active-site charge relay system residues include histidine 177 and glutamate 179.

This sequence belongs to the glutaminase PdxT/SNO family. In terms of assembly, in the presence of PdxS, forms a dodecamer of heterodimers. Only shows activity in the heterodimer.

It carries out the reaction aldehydo-D-ribose 5-phosphate + D-glyceraldehyde 3-phosphate + L-glutamine = pyridoxal 5'-phosphate + L-glutamate + phosphate + 3 H2O + H(+). The enzyme catalyses L-glutamine + H2O = L-glutamate + NH4(+). It participates in cofactor biosynthesis; pyridoxal 5'-phosphate biosynthesis. Its function is as follows. Catalyzes the hydrolysis of glutamine to glutamate and ammonia as part of the biosynthesis of pyridoxal 5'-phosphate. The resulting ammonia molecule is channeled to the active site of PdxS. This Methanospirillum hungatei JF-1 (strain ATCC 27890 / DSM 864 / NBRC 100397 / JF-1) protein is Pyridoxal 5'-phosphate synthase subunit PdxT.